A 440-amino-acid chain; its full sequence is MLLVNLAIFIAFLLLLAQLYRKTEKLGQTVFIGLLLGLLFGAVLQSAFEKPLLDKTLDWINVVSNGYVRLLQMIVMPLVFVSILSAIARINQTRSLGKVSVGVLSTLLITTAISAAIGIAMVHLFDVSAAGLIVGDRELAAQGKVLDKAGQVSNLTVPAMLVSFIPKNPFADLTGANPTSIISVVIFSALLGVAALSLGKEDQALGERIAQGVETLNKLVMRLVRFVIRLTPYGVFALMIKMAATSKWADIVNLGNFIVASYAAIALMFVVHGILLFFVKVNPVDYYKKVLPTLSFAFTSRSSAATIPLNIETQTAKLGNNNVIANFAATFGATIGQNGCGGIYPAMLAVMVAPMVGIDPFSFSYILTLIFVVAISSFGIAGVGGGATFAAIVVLSTLGLPLELIGLLISIEPIIDMGRTALNVNGAMVAGTITDRLLNK.

Helical transmembrane passes span 1-21 (MLLV…QLYR), 29-49 (TVFI…SAFE), 70-90 (LLQM…IARI), 101-121 (VGVL…GIAM), 179-199 (TSII…LSLG), 226-246 (FVIR…AATS), 258-278 (IVAS…LLFF), 343-363 (IYPA…PFSF), 366-386 (ILTL…VGGG), and 389-409 (FAAI…GLLI).

It belongs to the dicarboxylate/amino acid:cation symporter (DAACS) (TC 2.A.23) family.

It localises to the cell membrane. This is an uncharacterized protein from Haemophilus influenzae (strain ATCC 51907 / DSM 11121 / KW20 / Rd).